Here is a 70-residue protein sequence, read N- to C-terminus: Small ribosomal subunit protein bS18 (70 aa).

This sequence belongs to the bacterial ribosomal protein bS18 family. In terms of assembly, part of the 30S ribosomal subunit. Forms a tight heterodimer with protein bS6.

In terms of biological role, binds as a heterodimer with protein bS6 to the central domain of the 16S rRNA, where it helps stabilize the platform of the 30S subunit. This chain is Small ribosomal subunit protein bS18, found in Salinibacter ruber (strain DSM 13855 / M31).